Consider the following 274-residue polypeptide: Large ribosomal subunit protein uL2c (274 aa).

Disordered stretches follow at residues 1–22 (MAIH…DNQV) and 225–274 (PVDH…RRSK).

It belongs to the universal ribosomal protein uL2 family. Part of the 50S ribosomal subunit.

Its subcellular location is the plastid. It is found in the chloroplast. This chain is Large ribosomal subunit protein uL2c (rpl2), found in Silene latifolia (White campion).